The sequence spans 436 residues: tRNA(Ile)-lysidine synthase (436 aa).

Residue Ser-27–Ser-32 participates in ATP binding.

This sequence belongs to the tRNA(Ile)-lysidine synthase family.

It is found in the cytoplasm. The catalysed reaction is cytidine(34) in tRNA(Ile2) + L-lysine + ATP = lysidine(34) in tRNA(Ile2) + AMP + diphosphate + H(+). Ligates lysine onto the cytidine present at position 34 of the AUA codon-specific tRNA(Ile) that contains the anticodon CAU, in an ATP-dependent manner. Cytidine is converted to lysidine, thus changing the amino acid specificity of the tRNA from methionine to isoleucine. The polypeptide is tRNA(Ile)-lysidine synthase (Vibrio vulnificus (strain YJ016)).